We begin with the raw amino-acid sequence, 281 residues long: Pantothenate synthetase (281 aa).

26–33 lines the ATP pocket; the sequence is MGNLHDGH. His-33 serves as the catalytic Proton donor. Gln-57 provides a ligand contact to (R)-pantoate. Position 57 (Gln-57) interacts with beta-alanine. Position 145–148 (145–148) interacts with ATP; sequence GEKD. Residue Gln-151 coordinates (R)-pantoate. 182–185 is an ATP binding site; it reads MSSR.

This sequence belongs to the pantothenate synthetase family. Homodimer.

It localises to the cytoplasm. The catalysed reaction is (R)-pantoate + beta-alanine + ATP = (R)-pantothenate + AMP + diphosphate + H(+). It functions in the pathway cofactor biosynthesis; (R)-pantothenate biosynthesis; (R)-pantothenate from (R)-pantoate and beta-alanine: step 1/1. Its function is as follows. Catalyzes the condensation of pantoate with beta-alanine in an ATP-dependent reaction via a pantoyl-adenylate intermediate. In Idiomarina loihiensis (strain ATCC BAA-735 / DSM 15497 / L2-TR), this protein is Pantothenate synthetase.